Reading from the N-terminus, the 190-residue chain is Superoxide dismutase [Fe] (190 aa).

Positions 27, 75, 156, and 160 each coordinate Fe cation.

The protein belongs to the iron/manganese superoxide dismutase family. Homodimer. Requires Fe cation as cofactor.

The enzyme catalyses 2 superoxide + 2 H(+) = H2O2 + O2. Destroys superoxide anion radicals which are normally produced within the cells and which are toxic to biological systems. The protein is Superoxide dismutase [Fe] (SODB) of Entamoeba histolytica (strain ATCC 30459 / HM-1:IMSS / ABRM).